The chain runs to 262 residues: Serine/arginine-rich SC35-like splicing factor SCL30A (262 aa).

Disordered regions lie at residues 1-38 (MRGRSYTPSPPRGYGRRGRSPSPRGRFGGSRDSDLPTS) and 115-262 (ENRK…SPSQ). A phosphoserine mark is found at Ser9 and Ser20. In terms of domain architecture, RRM spans 37-115 (TSLLVRNLRH…RELTVVFAEE (79 aa)). Positions 115–140 (ENRKKPTEMRTRDRGGRSNRFQDRRR) are enriched in basic and acidic residues. Basic residues predominate over residues 150-161 (PPRRGRRSRSRS). Phosphoserine occurs at positions 166, 174, 176, and 178. Basic and acidic residues predominate over residues 180–190 (QDRRYEKERSY). Ser191 and Ser193 each carry phosphoserine. Over residues 209 to 226 (VKSHSRSPRRSVSPRKNR) the composition is skewed to basic residues. The span at 234–246 (RSQSPVPRQSRSP) shows a compositional bias: low complexity. Phosphoserine occurs at positions 235, 259, and 261.

It belongs to the splicing factor SR family. SCL subfamily. Component of the spliceosome. Interacts with SNRNP35, CYP59 and RS2Z33.

The protein localises to the nucleus speckle. Functionally, involved in intron recognition and spliceosome assembly. Binds probably to multiple 5'-GAAG-3' repeats found in its third intron, suggesting autoregulation of alternative splicing. May be necessary for accurate splicing of the 3' region of introns. The polypeptide is Serine/arginine-rich SC35-like splicing factor SCL30A (SCL30A) (Arabidopsis thaliana (Mouse-ear cress)).